A 197-amino-acid polypeptide reads, in one-letter code: Glycerol-3-phosphate acyltransferase (197 aa).

Transmembrane regions (helical) follow at residues 1-21, 50-70, 77-97, 111-131, 136-156, and 157-177; these read MNILIIFVSYLLGSLPTGFLI, WPALIVFIIDVGKGLIAVKIA, GLIEVIAGISAITGHIWPIWL, MFLALSWKVGLASLGIFLIVL, FVSLSSISAAIFLPFFMFFYL, and GNYMHSYFFISLIVALLVIWK.

The protein belongs to the PlsY family. Probably interacts with PlsX.

It is found in the cell inner membrane. The enzyme catalyses an acyl phosphate + sn-glycerol 3-phosphate = a 1-acyl-sn-glycero-3-phosphate + phosphate. It participates in lipid metabolism; phospholipid metabolism. Catalyzes the transfer of an acyl group from acyl-phosphate (acyl-PO(4)) to glycerol-3-phosphate (G3P) to form lysophosphatidic acid (LPA). This enzyme utilizes acyl-phosphate as fatty acyl donor, but not acyl-CoA or acyl-ACP. The polypeptide is Glycerol-3-phosphate acyltransferase (Prochlorococcus marinus (strain MIT 9312)).